We begin with the raw amino-acid sequence, 241 residues long: PHD finger protein ALFIN-LIKE 1 (241 aa).

An N-acetylalanine modification is found at alanine 2. The interval aspartate 142 to glutamate 182 is disordered. A PHD-type zinc finger spans residues aspartate 185–lysine 237.

The protein belongs to the Alfin family. In terms of assembly, interacts with H3K4me3 and to a lesser extent with H3K4me2. Ubiquitously expressed.

It localises to the nucleus. In terms of biological role, histone-binding component that specifically recognizes H3 tails trimethylated on 'Lys-4' (H3K4me3), which mark transcription start sites of virtually all active genes. This is PHD finger protein ALFIN-LIKE 1 (AL1) from Arabidopsis thaliana (Mouse-ear cress).